The sequence spans 82 residues: Exodeoxyribonuclease 7 small subunit (82 aa).

This sequence belongs to the XseB family. As to quaternary structure, heterooligomer composed of large and small subunits.

Its subcellular location is the cytoplasm. The enzyme catalyses Exonucleolytic cleavage in either 5'- to 3'- or 3'- to 5'-direction to yield nucleoside 5'-phosphates.. In terms of biological role, bidirectionally degrades single-stranded DNA into large acid-insoluble oligonucleotides, which are then degraded further into small acid-soluble oligonucleotides. The chain is Exodeoxyribonuclease 7 small subunit from Mannheimia succiniciproducens (strain KCTC 0769BP / MBEL55E).